The following is a 165-amino-acid chain: Chemotaxis protein CheW (165 aa).

This sequence belongs to the CheW family.

Functionally, plays an essential role in chemotaxis signal transduction system in order to colonize the host stomach. In Helicobacter pylori (strain ATCC 700392 / 26695) (Campylobacter pylori), this protein is Chemotaxis protein CheW.